The following is a 135-amino-acid chain: Poly [ADP-ribose] polymerase 1 (135 aa).

Residues 1 to 21 enclose the PARP alpha-helical domain; the sequence is QAKVEMLDNLLDIEVAYSLLK. Positions 30-135 constitute a PARP catalytic domain; the sequence is DPIDINYEKL…APVTGYMFGK (106 aa). NAD(+) contacts are provided by residues 104 to 106, Gly-113, and Arg-120; that span reads HGS. The active site involves Lys-135.

This sequence belongs to the ARTD/PARP family. As to quaternary structure, homodimer; PARP-type zinc-fingers from separate parp1 molecules form a dimer module that specifically recognizes DNA strand breaks. In terms of processing, poly-ADP-ribosylated on serine, glutamate and aspartate residues by autocatalysis. Auto-ADP-ribosylation on serine takes place following interaction with HPF1. Auto poly-ADP-ribosylation on serine residues promotes its dissociation from chromatin.

The protein resides in the chromosome. It localises to the nucleus. It is found in the nucleolus. The protein localises to the cytoplasm. Its subcellular location is the cytosol. It carries out the reaction NAD(+) + (ADP-D-ribosyl)n-acceptor = nicotinamide + (ADP-D-ribosyl)n+1-acceptor + H(+).. The catalysed reaction is L-seryl-[protein] + NAD(+) = O-(ADP-D-ribosyl)-L-seryl-[protein] + nicotinamide + H(+). It catalyses the reaction L-aspartyl-[protein] + NAD(+) = 4-O-(ADP-D-ribosyl)-L-aspartyl-[protein] + nicotinamide. The enzyme catalyses L-glutamyl-[protein] + NAD(+) = 5-O-(ADP-D-ribosyl)-L-glutamyl-[protein] + nicotinamide. It carries out the reaction L-tyrosyl-[protein] + NAD(+) = O-(ADP-D-ribosyl)-L-tyrosyl-[protein] + nicotinamide + H(+). The catalysed reaction is L-histidyl-[protein] + NAD(+) = N(tele)-(ADP-D-ribosyl)-L-histidyl-[protein] + nicotinamide + H(+). Its activity is regulated as follows. ADP-ribosyltransferase activity is regulated via an allosteric activation mechanism. In absence of activation signal, parp1 is autoinhibited by the PARP alpha-helical domain (also named HD region), which prevents effective NAD(+)-binding. Activity is highly stimulated by signals, such as DNA strand breaks. Binding to damaged DNA unfolds the PARP alpha-helical domain, relieving autoinhibition. Poly-ADP-ribosyltransferase activity is tightly regulated and parp1 is removed from damaged chromatin following initial poly-ADP-ribosylation of chromatin to avoid prolonged residence (trapping) that has cytotoxic consequences. A number of factors or post-translational modifications (auto-poly-ADP-ribosylation) promote parp1 removal from chromatin. Its function is as follows. Poly-ADP-ribosyltransferase that mediates poly-ADP-ribosylation of proteins and plays a key role in DNA repair. Mediates glutamate, aspartate, serine, histidine or tyrosine ADP-ribosylation of proteins: the ADP-D-ribosyl group of NAD(+) is transferred to the acceptor carboxyl group of target residues and further ADP-ribosyl groups are transferred to the 2'-position of the terminal adenosine moiety, building up a polymer with an average chain length of 20-30 units. Serine ADP-ribosylation of proteins constitutes the primary form of ADP-ribosylation of proteins in response to DNA damage. Specificity for the different amino acids is conferred by interacting factors, such as hpf1 and nmnat1. Following interaction with hpf1, catalyzes serine ADP-ribosylation of target proteins; hpf1 confers serine specificity by completing the parp1 active site. Also catalyzes tyrosine ADP-ribosylation of target proteins following interaction with hpf1. Following interaction with nmnat1, catalyzes glutamate and aspartate ADP-ribosylation of target proteins; nmnat1 confers glutamate and aspartate specificity. Parp1 initiates the repair of DNA breaks: recognizes and binds DNA breaks within chromatin and recruits hpf1, licensing serine ADP-ribosylation of target proteins, such as histones (H2BS6ADPr and H3S10ADPr), thereby promoting decompaction of chromatin and the recruitment of repair factors leading to the reparation of DNA strand breaks. In addition to base excision repair (BER) pathway, also involved in double-strand breaks (DSBs) repair. Mediates the poly-ADP-ribosylation of a number of proteins. In addition to proteins, also able to ADP-ribosylate DNA: catalyzes ADP-ribosylation of DNA strand break termini containing terminal phosphates and a 2'-OH group in single- and double-stranded DNA, respectively. Parp1-mediated DNA repair in neurons plays a role in sleep: senses DNA damage in neurons and promotes sleep, facilitating efficient DNA repair. In addition to DNA repair, also involved in other processes, such as transcription regulation, programmed cell death, membrane repair, adipogenesis and innate immunity. Acts as a repressor of transcription: binds to nucleosomes and modulates chromatin structure in a manner similar to histone H1, thereby altering RNA polymerase II. Acts both as a positive and negative regulator of transcription elongation, depending on the context. Poly-ADP-ribose chains generated by parp1 also play a role in poly-ADP-ribose-dependent cell death, a process named parthanatos. Also acts as a negative regulator of the cGAS-STING pathway by mediating poly-ADP-ribosylation and inactivation of cgas. Acts as a negative regulator of adipogenesis by catalyzing poly ADP-ribosylation of histone H2B on 'Glu-35' (H2BE35ADPr). The sequence is that of Poly [ADP-ribose] polymerase 1 (parp1) from Oncorhynchus masou (Cherry salmon).